Reading from the N-terminus, the 90-residue chain is Co-chaperonin GroES (90 aa).

Belongs to the GroES chaperonin family. In terms of assembly, heptamer of 7 subunits arranged in a ring. Interacts with the chaperonin GroEL.

It is found in the cytoplasm. Its function is as follows. Together with the chaperonin GroEL, plays an essential role in assisting protein folding. The GroEL-GroES system forms a nano-cage that allows encapsulation of the non-native substrate proteins and provides a physical environment optimized to promote and accelerate protein folding. GroES binds to the apical surface of the GroEL ring, thereby capping the opening of the GroEL channel. The protein is Co-chaperonin GroES of Helicobacter hepaticus (strain ATCC 51449 / 3B1).